We begin with the raw amino-acid sequence, 386 residues long: WD repeat-containing protein 89 (386 aa).

WD repeat units follow at residues 21–65 (KEPT…LLRE), 68–107 (GSPG…EKPV), 112–156 (GYPS…QDLS), 167–207 (THSD…EEDA), 213–253 (NSVS…TDEP), and 318–357 (GHAA…KTFT).

The protein is WD repeat-containing protein 89 (Wdr89) of Mus musculus (Mouse).